A 249-amino-acid chain; its full sequence is ATP synthase subunit a, chloroplastic (249 aa).

A run of 5 helical transmembrane segments spans residues Gly-38–Ala-58, Val-97–Ile-117, Ile-136–Ser-156, Leu-201–Leu-221, and Gly-222–Gly-242.

It belongs to the ATPase A chain family. In terms of assembly, F-type ATPases have 2 components, CF(1) - the catalytic core - and CF(0) - the membrane proton channel. CF(1) has five subunits: alpha(3), beta(3), gamma(1), delta(1), epsilon(1). CF(0) has four main subunits: a, b, b' and c.

It is found in the plastid. The protein localises to the chloroplast thylakoid membrane. In terms of biological role, key component of the proton channel; it plays a direct role in the translocation of protons across the membrane. This is ATP synthase subunit a, chloroplastic from Chlorokybus atmophyticus (Soil alga).